The sequence spans 153 residues: Endoribonuclease YbeY (153 aa).

The Zn(2+) site is built by His118, His122, and His128.

Belongs to the endoribonuclease YbeY family. Zn(2+) is required as a cofactor.

The protein localises to the cytoplasm. In terms of biological role, single strand-specific metallo-endoribonuclease involved in late-stage 70S ribosome quality control and in maturation of the 3' terminus of the 16S rRNA. The polypeptide is Endoribonuclease YbeY (Chloroflexus aggregans (strain MD-66 / DSM 9485)).